We begin with the raw amino-acid sequence, 198 residues long: Endonuclease V (198 aa).

Asp38 and Asp101 together coordinate Mg(2+).

It belongs to the endonuclease V family. Mg(2+) is required as a cofactor.

The protein resides in the cytoplasm. It catalyses the reaction Endonucleolytic cleavage at apurinic or apyrimidinic sites to products with a 5'-phosphate.. Its function is as follows. DNA repair enzyme involved in the repair of deaminated bases. Selectively cleaves double-stranded DNA at the second phosphodiester bond 3' to a deoxyinosine leaving behind the intact lesion on the nicked DNA. In Saccharolobus islandicus (strain M.16.4 / Kamchatka #3) (Sulfolobus islandicus), this protein is Endonuclease V.